A 438-amino-acid polypeptide reads, in one-letter code: MPPKEDWEKYQKPVDTEEENDKNPPPLDEGDIELLKSYATGPYARELAAIKEDTEAVLKRINDTVGIKESDTGLAPISFWDVAADRQRMSEEQPLQVARCTKIIENEQSAEKNAYVINLKQIAKFVVSLGERVSPTDIEEGMRVGCDRNKYAIQLPLPPKIDPSVTMMQVEEKPDVTYGDVGGCKEQIERLREVVELPLLSPERFVKLGIDPPKGIMLYGPPGTGKTLCARAVANRTDATFIRVIGSELVQKYVGEGARMVRELFEMARTKKACIIFFDEIDAIGGARFDDGAGGDNEVQRTMLELITQLDGFDPRGNIKVLFATNRPNTLDEALMRPGRIDRKVEFGLPDLEGRAHILRIHAKSMAIDKDIRWELIARLCPSQTGAELRSVCTEAGMFAIRARRRVATEKDFLDAVQKVVKGNQKFSSTADYMNMSS.

Residues Met1–Asp15 are compositionally biased toward basic and acidic residues. Residues Met1 to Asp31 are disordered. Ser90 carries the post-translational modification Phosphoserine. Gly220 to Thr227 provides a ligand contact to ATP.

It belongs to the AAA ATPase family.

It localises to the cytoplasm. The protein localises to the nucleus. Its function is as follows. The 26S proteasome is involved in the ATP-dependent degradation of ubiquitinated proteins. The regulatory (or ATPase) complex confers ATP dependency and substrate specificity to the 26S complex. The chain is 26S proteasome regulatory subunit 7 homolog (rpt1) from Schizosaccharomyces pombe (strain 972 / ATCC 24843) (Fission yeast).